The sequence spans 103 residues: Large ribosomal subunit protein bL21 (103 aa).

It belongs to the bacterial ribosomal protein bL21 family. In terms of assembly, part of the 50S ribosomal subunit. Contacts protein L20.

This protein binds to 23S rRNA in the presence of protein L20. The chain is Large ribosomal subunit protein bL21 from Vibrio parahaemolyticus serotype O3:K6 (strain RIMD 2210633).